The primary structure comprises 283 residues: MAEITAALVKELRERTGAGMMECKKALVEANGDIELAIDNMRKSGQAKAAKKAGRIAAEGVIRVRIGSGFGVLVELNCETDFVAKDTGFLGLADEVADYALANKGTTIDTLATHFEDKRAALVAKIGENMTIRRVQYLEGDVIAQYLHGAKIGVLVAGSGSEEELRKVAMHVAASKPEFVNPEDVSAEVVEHERQIQIDIAINSGKPKEIAEKMVEGRMKKFTGEVSLTGQAFVMDPSVSVGDYLKSVNTSVTNFIRLEVGEGIEKVEEDFAAEVAKITGNNA.

Residues 80–83 are involved in Mg(2+) ion dislocation from EF-Tu; it reads TDFV.

The protein belongs to the EF-Ts family.

It is found in the cytoplasm. Associates with the EF-Tu.GDP complex and induces the exchange of GDP to GTP. It remains bound to the aminoacyl-tRNA.EF-Tu.GTP complex up to the GTP hydrolysis stage on the ribosome. The sequence is that of Elongation factor Ts from Histophilus somni (strain 129Pt) (Haemophilus somnus).